A 683-amino-acid chain; its full sequence is DNA ligase (683 aa).

NAD(+)-binding positions include 35 to 39, 84 to 85, and Glu115; these read DADYD and SL. The active-site N6-AMP-lysine intermediate is Lys117. 4 residues coordinate NAD(+): Arg138, Glu175, Lys293, and Lys317. Cys411, Cys414, Cys429, and Cys435 together coordinate Zn(2+). The BRCT domain occupies 598 to 683; sequence QTNSAVSGKT…LQNISTGAQQ (86 aa).

It belongs to the NAD-dependent DNA ligase family. LigA subfamily. It depends on Mg(2+) as a cofactor. Mn(2+) serves as cofactor.

It catalyses the reaction NAD(+) + (deoxyribonucleotide)n-3'-hydroxyl + 5'-phospho-(deoxyribonucleotide)m = (deoxyribonucleotide)n+m + AMP + beta-nicotinamide D-nucleotide.. Functionally, DNA ligase that catalyzes the formation of phosphodiester linkages between 5'-phosphoryl and 3'-hydroxyl groups in double-stranded DNA using NAD as a coenzyme and as the energy source for the reaction. It is essential for DNA replication and repair of damaged DNA. This is DNA ligase from Nitrosomonas eutropha (strain DSM 101675 / C91 / Nm57).